The following is a 206-amino-acid chain: Thymidylate kinase (206 aa).

11-18 (GIDGAGKT) contributes to the ATP binding site.

This sequence belongs to the thymidylate kinase family.

The enzyme catalyses dTMP + ATP = dTDP + ADP. In terms of biological role, phosphorylation of dTMP to form dTDP in both de novo and salvage pathways of dTTP synthesis. In Burkholderia thailandensis (strain ATCC 700388 / DSM 13276 / CCUG 48851 / CIP 106301 / E264), this protein is Thymidylate kinase.